Consider the following 1218-residue polypeptide: Coatomer subunit alpha-3 (1218 aa).

WD repeat units follow at residues Thr-7 to Asp-48, Glu-49 to Thr-88, Gly-91 to Thr-132, Gly-133 to Val-172, Gly-202 to Val-241, Gly-246 to Thr-285, Arg-288 to Ser-326, Ser-363 to Thr-404, and Pro-450 to Gln-489. The disordered stretch occupies residues Ala-854–Pro-893. A compositionally biased stretch (acidic residues) spans Phe-862–Pro-888.

As to quaternary structure, oligomeric complex that consists of at least the alpha, beta, beta', gamma, delta, epsilon and zeta subunits.

It is found in the cytoplasm. The protein localises to the golgi apparatus membrane. The protein resides in the cytoplasmic vesicle. Its subcellular location is the COPI-coated vesicle membrane. The coatomer is a cytosolic protein complex that binds to dilysine motifs and reversibly associates with Golgi non-clathrin-coated vesicles, which further mediate biosynthetic protein transport from the ER, via the Golgi up to the trans Golgi network. Coatomer complex is required for budding from Golgi membranes, and is essential for the retrograde Golgi-to-ER transport of dilysine-tagged proteins. The polypeptide is Coatomer subunit alpha-3 (Oryza sativa subsp. japonica (Rice)).